Consider the following 418-residue polypeptide: Tyrosine--tRNA ligase (418 aa).

Y34 contributes to the L-tyrosine binding site. A 'HIGH' region motif is present at residues 39–48; that stretch reads PTADSLHLGH. 2 residues coordinate L-tyrosine: Y169 and Q173. The 'KMSKS' region motif lies at 229 to 233; sequence KFGKS. K232 contributes to the ATP binding site. An S4 RNA-binding domain is found at 352–418; that stretch reads LNLVDMLVTA…GKKKYAVLTY (67 aa).

This sequence belongs to the class-I aminoacyl-tRNA synthetase family. TyrS type 1 subfamily. Homodimer.

It localises to the cytoplasm. The catalysed reaction is tRNA(Tyr) + L-tyrosine + ATP = L-tyrosyl-tRNA(Tyr) + AMP + diphosphate + H(+). Catalyzes the attachment of tyrosine to tRNA(Tyr) in a two-step reaction: tyrosine is first activated by ATP to form Tyr-AMP and then transferred to the acceptor end of tRNA(Tyr). The sequence is that of Tyrosine--tRNA ligase from Streptococcus pyogenes serotype M28 (strain MGAS6180).